Reading from the N-terminus, the 326-residue chain is Vitamin B12 import system permease protein BtuC (326 aa).

The next 9 helical transmembrane spans lie at 15–35, 61–81, 88–108, 112–132, 146–166, 184–204, 240–260, 274–294, and 302–322; these read WLLS…CAGE, LAVL…QALF, PGLL…VLLG, LPGW…TLIL, LLAG…AIYF, GGVD…LIWI, GWMV…GLVI, VLLP…DVVA, and ELPI…WLLL.

It belongs to the binding-protein-dependent transport system permease family. FecCD subfamily. As to quaternary structure, the complex is composed of two ATP-binding proteins (BtuD), two transmembrane proteins (BtuC) and a solute-binding protein (BtuF).

It localises to the cell inner membrane. Its function is as follows. Part of the ABC transporter complex BtuCDF involved in vitamin B12 import. Involved in the translocation of the substrate across the membrane. This is Vitamin B12 import system permease protein BtuC from Salmonella enteritidis PT4 (strain P125109).